The following is a 223-amino-acid chain: Adenylate kinase (223 aa).

10–15 (GSGKGT) is an ATP binding site. The tract at residues 30–59 (ESGAIFREHIGGGTELGKKAKAYIDRGDLV) is NMP. Residues serine 31, arginine 36, 57-59 (DLV), 84-87 (GFPR), and glutamine 91 contribute to the AMP site. The tract at residues 125–164 (GRRLCKNNNNHPNNIFIEAIKPNGDVCRVCGGTLSSRSDD) is LID. Arginine 126 contacts ATP. AMP is bound by residues arginine 161 and arginine 173. Residue glycine 209 participates in ATP binding.

The protein belongs to the adenylate kinase family. Monomer.

It is found in the cytoplasm. It catalyses the reaction AMP + ATP = 2 ADP. The protein operates within purine metabolism; AMP biosynthesis via salvage pathway; AMP from ADP: step 1/1. In terms of biological role, catalyzes the reversible transfer of the terminal phosphate group between ATP and AMP. Plays an important role in cellular energy homeostasis and in adenine nucleotide metabolism. The protein is Adenylate kinase of Desulfovibrio desulfuricans (strain ATCC 27774 / DSM 6949 / MB).